The sequence spans 328 residues: Interleukin-12 subunit beta (328 aa).

Residues 1 to 22 form the signal peptide; it reads MCHQQLVISWFSLVFLASPLVA. One can recognise an Ig-like C2-type domain in the interval 23–106; the sequence is IWELKKDVYV…LSHSLLLLHK (84 aa). Intrachain disulfides connect cysteine 50–cysteine 90, cysteine 131–cysteine 142, and cysteine 170–cysteine 193. N-linked (GlcNAc...) asparagine glycosylation is present at asparagine 135. Residue asparagine 222 is glycosylated (N-linked (GlcNAc...) asparagine). The 92-residue stretch at 237 to 328 folds into the Fibronectin type-III domain; sequence PPKNLQLKPL…WSEWASVPCS (92 aa). A disulfide bridge connects residues cysteine 300 and cysteine 327. A glycan (C-linked (Man) tryptophan) is linked at tryptophan 319.

It belongs to the IL-12B family. As to quaternary structure, heterodimer with IL12A; disulfide-linked. The heterodimer is known as interleukin IL-12. Heterodimer with IL23A; disulfide-linked. The heterodimer is known as interleukin IL-23. Also secreted as a monomer. Interacts with NBR1; this interaction promotes IL-12 secretion. In terms of processing, known to be C-mannosylated in the recombinant protein; it is not yet known for sure if the wild-type protein is also modified.

The protein localises to the secreted. In terms of biological role, cytokine that can act as a growth factor for activated T and NK cells, enhance the lytic activity of NK/lymphokine-activated killer cells, and stimulate the production of IFN-gamma by resting PBMC. Functionally, associates with IL23A to form the IL-23 interleukin, a heterodimeric cytokine which functions in innate and adaptive immunity. IL-23 may constitute with IL-17 an acute response to infection in peripheral tissues. IL-23 binds to a heterodimeric receptor complex composed of IL12RB1 and IL23R, activates the Jak-Stat signaling cascade, stimulates memory rather than naive T-cells and promotes production of pro-inflammatory cytokines. IL-23 induces autoimmune inflammation and thus may be responsible for autoimmune inflammatory diseases and may be important for tumorigenesis. This Homo sapiens (Human) protein is Interleukin-12 subunit beta (IL12B).